The chain runs to 342 residues: NADH-quinone oxidoreductase subunit H (342 aa).

8 helical membrane-spanning segments follow: residues 15-35 (LLII…LMVA), 86-106 (VLFI…WAVV), 119-139 (VGVL…IIAG), 159-179 (VSYE…VGSL), 190-210 (HVWF…SGLA), 251-271 (FMIC…PFDI), 277-297 (VPGP…FFWV), and 316-336 (VFLP…ELAG).

Belongs to the complex I subunit 1 family. NDH-1 is composed of 14 different subunits. Subunits NuoA, H, J, K, L, M, N constitute the membrane sector of the complex.

The protein resides in the cell inner membrane. It carries out the reaction a quinone + NADH + 5 H(+)(in) = a quinol + NAD(+) + 4 H(+)(out). NDH-1 shuttles electrons from NADH, via FMN and iron-sulfur (Fe-S) centers, to quinones in the respiratory chain. The immediate electron acceptor for the enzyme in this species is believed to be ubiquinone. Couples the redox reaction to proton translocation (for every two electrons transferred, four hydrogen ions are translocated across the cytoplasmic membrane), and thus conserves the redox energy in a proton gradient. This subunit may bind ubiquinone. The protein is NADH-quinone oxidoreductase subunit H of Granulibacter bethesdensis (strain ATCC BAA-1260 / CGDNIH1).